A 120-amino-acid chain; its full sequence is Aspartate 1-decarboxylase (120 aa).

The Schiff-base intermediate with substrate; via pyruvic acid role is filled by serine 25. Serine 25 carries the post-translational modification Pyruvic acid (Ser). A substrate-binding site is contributed by threonine 57. Tyrosine 58 serves as the catalytic Proton donor. 73 to 75 (GAA) is a binding site for substrate.

This sequence belongs to the PanD family. Heterooctamer of four alpha and four beta subunits. It depends on pyruvate as a cofactor. Post-translationally, is synthesized initially as an inactive proenzyme, which is activated by self-cleavage at a specific serine bond to produce a beta-subunit with a hydroxyl group at its C-terminus and an alpha-subunit with a pyruvoyl group at its N-terminus.

The protein localises to the cytoplasm. It catalyses the reaction L-aspartate + H(+) = beta-alanine + CO2. The protein operates within cofactor biosynthesis; (R)-pantothenate biosynthesis; beta-alanine from L-aspartate: step 1/1. In terms of biological role, catalyzes the pyruvoyl-dependent decarboxylation of aspartate to produce beta-alanine. This chain is Aspartate 1-decarboxylase, found in Deinococcus radiodurans (strain ATCC 13939 / DSM 20539 / JCM 16871 / CCUG 27074 / LMG 4051 / NBRC 15346 / NCIMB 9279 / VKM B-1422 / R1).